The primary structure comprises 510 residues: 2,3-bisphosphoglycerate-independent phosphoglycerate mutase (510 aa).

The Mn(2+) site is built by D14 and S64. The active-site Phosphoserine intermediate is S64. Substrate-binding positions include H125, 155-156 (RD), R187, R193, 259-262 (RADR), and K332. Residues D399, H403, D440, H441, and H459 each contribute to the Mn(2+) site.

It belongs to the BPG-independent phosphoglycerate mutase family. In terms of assembly, monomer. Mn(2+) serves as cofactor.

It carries out the reaction (2R)-2-phosphoglycerate = (2R)-3-phosphoglycerate. It functions in the pathway carbohydrate degradation; glycolysis; pyruvate from D-glyceraldehyde 3-phosphate: step 3/5. Its function is as follows. Catalyzes the interconversion of 2-phosphoglycerate and 3-phosphoglycerate. The protein is 2,3-bisphosphoglycerate-independent phosphoglycerate mutase of Ectopseudomonas mendocina (strain ymp) (Pseudomonas mendocina).